The following is a 558-amino-acid chain: C4b-binding protein alpha chain (558 aa).

The signal sequence occupies residues 1-13; it reads MSLTAALWVAVFG. Sushi domains follow at residues 14 to 74, 75 to 136, 137 to 201, 202 to 260, 261 to 326, 327 to 388, 389 to 445, and 446 to 503; these read KCGP…ACVK, KSCR…ECVI, AKCG…TCER, IICP…VCEL, NSCT…GCKE, ICCP…SCHQ, SCDF…QCKA, and LCRK…RCEQ. 16 cysteine pairs are disulfide-bonded: Cys15–Cys60, Cys45–Cys72, Cys77–Cys118, Cys104–Cys134, Cys139–Cys182, Cys168–Cys199, Cys204–Cys246, Cys232–Cys258, Cys263–Cys312, Cys296–Cys324, Cys329–Cys373, Cys363–Cys386, Cys390–Cys431, Cys417–Cys443, Cys447–Cys488, and Cys474–Cys501. An N-linked (GlcNAc...) asparagine glycan is attached at Asn31. Residues Asn177 and Asn186 are each glycosylated (N-linked (GlcNAc...) asparagine). N-linked (GlcNAc...) asparagine glycans are attached at residues Asn469 and Asn491.

In terms of assembly, disulfide-linked complex of alpha and beta chains.

The protein resides in the secreted. Its function is as follows. Controls the classical pathway of complement activation. It binds as a cofactor to C3b/C4b inactivator (C3bINA), which then hydrolyzes the complement fragment C4b. It also accelerates the degradation of the C4bC2a complex (C3 convertase) by dissociating the complement fragment C2a. Alpha chain binds C4b. It also interacts with anticoagulant protein S and with serum amyloid P component. This chain is C4b-binding protein alpha chain (C4bpa), found in Rattus norvegicus (Rat).